The following is a 301-amino-acid chain: Probable enoyl-CoA hydratase 2, mitochondrial (301 aa).

The N-terminal 32 residues, 1-32 (MSFVKYLRRDNLLQLAGKPSLSRNYILQTCRT), are a transit peptide targeting the mitochondrion. Substrate-binding positions include 105–109 (AGADL) and Gly152.

This sequence belongs to the enoyl-CoA hydratase/isomerase family.

It localises to the mitochondrion. It carries out the reaction a (3S)-3-hydroxyacyl-CoA = a (2E)-enoyl-CoA + H2O. The catalysed reaction is a 4-saturated-(3S)-3-hydroxyacyl-CoA = a (3E)-enoyl-CoA + H2O. It functions in the pathway lipid metabolism; fatty acid beta-oxidation. In terms of biological role, straight-chain enoyl-CoA thioesters from C4 up to at least C16 are processed, although with decreasing catalytic rate. The chain is Probable enoyl-CoA hydratase 2, mitochondrial from Arabidopsis thaliana (Mouse-ear cress).